A 159-amino-acid polypeptide reads, in one-letter code: MSSLCPYTGRPTGLFRDFEDMMPYWAQRHSMLNNFNNIVPQQLNEVENTAQKFCVKLDVAAFKPEELKVNLEGHVLTIEGHHEVKTEHGFSKRSFTRQFTLPKDVDLAHIHTVINKEGQMTIDAPKTGSNTTVRALPIHTSAGHAVTQKPSSTTTTGKH.

The region spanning 33–141 (NNFNNIVPQQ…TVRALPIHTS (109 aa)) is the sHSP domain.

It belongs to the small heat shock protein (HSP20) family.

This chain is Stress-induced protein 1, found in Caenorhabditis elegans.